The following is a 389-amino-acid chain: Chalcone synthase 4 (389 aa).

Cys-164 is a catalytic residue.

It belongs to the thiolase-like superfamily. Chalcone/stilbene synthases family.

The catalysed reaction is (E)-4-coumaroyl-CoA + 3 malonyl-CoA + 3 H(+) = 2',4,4',6'-tetrahydroxychalcone + 3 CO2 + 4 CoA. The protein operates within secondary metabolite biosynthesis; flavonoid biosynthesis. In terms of biological role, the primary product of this enzyme is 4,2',4',6'-tetrahydroxychalcone (also termed naringenin-chalcone or chalcone) which can under specific conditions spontaneously isomerize into naringenin. The chain is Chalcone synthase 4 (CHS4) from Pisum sativum (Garden pea).